The chain runs to 104 residues: Large ribosomal subunit protein eL30 (104 aa).

This sequence belongs to the eukaryotic ribosomal protein eL30 family.

The chain is Large ribosomal subunit protein eL30 (RPL30) from Tetrahymena thermophila (strain SB210).